The primary structure comprises 279 residues: Alcohol dehydrogenase-related 31 kDa protein (279 aa).

11 to 34 contacts NAD(+); sequence YVADCGGIALETSKVLMTKNIAKL. Serine 139 is a binding site for substrate. Tyrosine 152 functions as the Proton acceptor in the catalytic mechanism.

It belongs to the short-chain dehydrogenases/reductases (SDR) family.

The protein is Alcohol dehydrogenase-related 31 kDa protein (Adhr) of Drosophila madeirensis (Fruit fly).